Here is a 305-residue protein sequence, read N- to C-terminus: ADP,ATP carrier protein (305 aa).

3 Solcar repeats span residues S8–M101, K112–L204, and N212–I298. 5 helical membrane passes run F10 to L37, T78 to F102, Y110 to L130, F180 to L201, and L215 to L235. Residues R83 and K95 each contribute to the ADP site. Residue R239 coordinates ADP. Positions R239–M244 are important for transport activity. A Nucleotide carrier signature motif motif is present at residues R239–M244. Residues C275–L295 form a helical membrane-spanning segment.

Belongs to the mitochondrial carrier (TC 2.A.29) family. As to quaternary structure, monomer.

Its subcellular location is the mitochondrion inner membrane. The enzyme catalyses ADP(in) + ATP(out) = ADP(out) + ATP(in). Its activity is regulated as follows. The matrix-open state (m-state) is inhibited by the membrane-permeable bongkrekic acid (BKA). The cytoplasmic-open state (c-state) is inhibited by the membrane-impermeable toxic inhibitor carboxyatractyloside (CATR). Its function is as follows. ADP:ATP antiporter that mediates import of ADP into the mitochondrial matrix for ATP synthesis, and export of ATP out to fuel the cell. Cycles between the cytoplasmic-open state (c-state) and the matrix-open state (m-state): operates by the alternating access mechanism with a single substrate-binding site intermittently exposed to either the cytosolic (c-state) or matrix (m-state) side of the inner mitochondrial membrane. The polypeptide is ADP,ATP carrier protein (AAC) (Kluyveromyces lactis (strain ATCC 8585 / CBS 2359 / DSM 70799 / NBRC 1267 / NRRL Y-1140 / WM37) (Yeast)).